Consider the following 453-residue polypeptide: Sensor histidine kinase CpxA (453 aa).

The Cytoplasmic portion of the chain corresponds to 1–4 (MTAR). A helical transmembrane segment spans residues 5–25 (IFAIFWLTLALVLMLVLMLPK). The Periplasmic portion of the chain corresponds to 26 to 159 (LDSRQMTELL…SDFINLLFDR (134 aa)). Residues 160–180 (PLLLLIVTMLVSAPLLLWLAW) form a helical membrane-spanning segment. The 54-residue stretch at 180 to 233 (WSLAKPARKLKNAADEVAQGNLRQHPELEAGPQEFLAAGASFNQMVTALERMMT) folds into the HAMP domain. Residues 181–453 (SLAKPARKLK…TIWLPLYKRT (273 aa)) are Cytoplasmic-facing. One can recognise a Histidine kinase domain in the interval 241–451 (DISHELRTPL…RLTIWLPLYK (211 aa)). His244 serves as the catalytic Nucleophile. The residue at position 244 (His244) is a Phosphohistidine; by autocatalysis. Residues 244–247 (HELR), 355–360 (RNALRY), Asp382, 401–402 (RT), and 412–417 (GTGLGL) each bind ATP.

In terms of assembly, interacts with cognate response regulator CpxR.

It localises to the cell inner membrane. It carries out the reaction ATP + protein L-histidine = ADP + protein N-phospho-L-histidine.. Its activity is regulated as follows. The two-component system is activated by envelope stress such as overexpression of some (misfolded) periplasmic proteins. In terms of biological role, histidine kinase member of the two-component regulatory system CpxA/CpxR which responds to envelope stress response by activating or, in some cases, repressing expression of downstream genes. Activates CpxR by phosphorylation. The chain is Sensor histidine kinase CpxA from Klebsiella pneumoniae subsp. pneumoniae (strain HS11286).